A 485-amino-acid polypeptide reads, in one-letter code: UDP-N-acetylmuramoyl-L-alanyl-D-glutamate--2,6-diaminopimelate ligase (485 aa).

Leu-27 and Ser-29 together coordinate UDP-N-acetyl-alpha-D-muramoyl-L-alanyl-D-glutamate. 106 to 112 serves as a coordination point for ATP; sequence GTSGKTS. Residues 148–149, Ser-175, Gln-181, and Arg-183 each bind UDP-N-acetyl-alpha-D-muramoyl-L-alanyl-D-glutamate; that span reads TT. Lys-215 is modified (N6-carboxylysine). Residues Arg-382, 406-409, Gly-454, and Glu-458 each bind meso-2,6-diaminopimelate; that span reads DNPR. Residues 406–409 carry the Meso-diaminopimelate recognition motif motif; that stretch reads DNPR.

It belongs to the MurCDEF family. MurE subfamily. The cofactor is Mg(2+). Carboxylation is probably crucial for Mg(2+) binding and, consequently, for the gamma-phosphate positioning of ATP.

The protein localises to the cytoplasm. It carries out the reaction UDP-N-acetyl-alpha-D-muramoyl-L-alanyl-D-glutamate + meso-2,6-diaminopimelate + ATP = UDP-N-acetyl-alpha-D-muramoyl-L-alanyl-gamma-D-glutamyl-meso-2,6-diaminopimelate + ADP + phosphate + H(+). Its pathway is cell wall biogenesis; peptidoglycan biosynthesis. In terms of biological role, catalyzes the addition of meso-diaminopimelic acid to the nucleotide precursor UDP-N-acetylmuramoyl-L-alanyl-D-glutamate (UMAG) in the biosynthesis of bacterial cell-wall peptidoglycan. This is UDP-N-acetylmuramoyl-L-alanyl-D-glutamate--2,6-diaminopimelate ligase from Bradyrhizobium diazoefficiens (strain JCM 10833 / BCRC 13528 / IAM 13628 / NBRC 14792 / USDA 110).